The chain runs to 297 residues: MATNLRGVMAALLTPFDQQQALDKASLRRLVQFNIQQGIDGLYVGGSTGEAFVQSLSEREQVLEIVAEETKGKIKLIAHVGCVSTAESQQLAASAKRYGFDAVSAVTPFYYPFSFEEHCDHYRAIIDSADGLPMVVYNIPALSGVKLTLDQINTLVTLPGVGALKQTSGDLYQMEQIRREHPDLVLYNGYDEIFASGLLAGADGGIGSTYNIMGWRYQGIVKALKEGDIQTAQKLQTECNKVIDLLIKTGVFRGLKTVLHYMDVVSVPLCRKPFGPVDEKYLPELKALAQQLMQERG.

2 residues coordinate aceneuramate: S47 and T48. Y137 serves as the catalytic Proton donor. K165 (schiff-base intermediate with substrate) is an active-site residue. Residues T167, G189, D191, E192, and S208 each coordinate aceneuramate.

It belongs to the DapA family. NanA subfamily. In terms of assembly, homotetramer.

It localises to the cytoplasm. The catalysed reaction is aceneuramate = aldehydo-N-acetyl-D-mannosamine + pyruvate. Its pathway is amino-sugar metabolism; N-acetylneuraminate degradation; D-fructose 6-phosphate from N-acetylneuraminate: step 1/5. Its function is as follows. Catalyzes the reversible aldol cleavage of N-acetylneuraminic acid (sialic acid; Neu5Ac) to form pyruvate and N-acetylmannosamine (ManNAc) via a Schiff base intermediate. The protein is N-acetylneuraminate lyase of Shigella boydii serotype 4 (strain Sb227).